The sequence spans 86 residues: Small ribosomal subunit protein bS18 (86 aa).

Belongs to the bacterial ribosomal protein bS18 family. Part of the 30S ribosomal subunit. Forms a tight heterodimer with protein bS6.

Its function is as follows. Binds as a heterodimer with protein bS6 to the central domain of the 16S rRNA, where it helps stabilize the platform of the 30S subunit. This is Small ribosomal subunit protein bS18 from Heliobacterium modesticaldum (strain ATCC 51547 / Ice1).